A 309-amino-acid polypeptide reads, in one-letter code: NADH-cytochrome b5 reductase 1 (309 aa).

A helical membrane pass occupies residues 30–50; that stretch reads FVPYAVAVTAILAGLKLFTGG. The FAD-binding FR-type domain maps to 60–165; sequence TEFQEFVLKE…RGPKGAMVYT (106 aa). Residues 145–160 and 171–208 each bind FAD; these read TTLKIGDTMKVRGPKG and HIGMIAGGTGITPMLQIIKAVIRNRPRNGGNDTTKLDL.

This sequence belongs to the flavoprotein pyridine nucleotide cytochrome reductase family. As to quaternary structure, monomer. Component of the 2-(3-amino-3-carboxypropyl)histidine synthase complex composed of dph1, dph2, dph3 and a NADH-dependent reductase, predominantly cbr1. Requires FAD as cofactor.

It is found in the mitochondrion outer membrane. The catalysed reaction is 2 Fe(III)-[cytochrome b5] + NADH = 2 Fe(II)-[cytochrome b5] + NAD(+) + H(+). It catalyses the reaction 2 Fe(3+)-[Dph3] + NADH = 2 Fe(2+)-[Dph3] + NAD(+) + H(+). It participates in protein modification; peptidyl-diphthamide biosynthesis. In terms of biological role, NADH-dependent reductase for dph3 and cytochrome b5. Required for the first step of diphthamide biosynthesis, a post-translational modification of histidine which occurs in elongation factor 2. Dph1 and dph2 transfer a 3-amino-3-carboxypropyl (ACP) group from S-adenosyl-L-methionine (SAM) to a histidine residue, the reaction is assisted by a reduction system comprising dph3 and a NADH-dependent reductase, predominantly cbr1. By reducing dph3, also involved in the formation of the tRNA wobble base modification mcm5s 2U (5-methoxycarbonylmethyl-2-thiouridine), mediated by the elongator complex. The cytochrome b5/NADH cytochrome b5 reductase electron transfer system supports the catalytic activity of several sterol biosynthetic enzymes. This Aspergillus fumigatus (strain ATCC MYA-4609 / CBS 101355 / FGSC A1100 / Af293) (Neosartorya fumigata) protein is NADH-cytochrome b5 reductase 1 (cbr1).